The sequence spans 70 residues: Probable rubredoxin HupI (70 aa).

The 52-residue stretch at 15–66 (DDRMECGICWHVYDPAEGDPVWQIPPGTPFSNLTEDWRCPNCDALQSKFMRL) folds into the Rubredoxin-like domain. Positions 20, 23, 53, and 56 each coordinate Fe cation.

The protein belongs to the rubredoxin family. Fe(3+) is required as a cofactor.

Its function is as follows. Could be an electron transport intermediate in hydrogen oxidation. In Rhizobium leguminosarum bv. viciae, this protein is Probable rubredoxin HupI (hupI).